Reading from the N-terminus, the 238-residue chain is UPF0280 protein Mboo_1274 (238 aa).

This sequence belongs to the UPF0280 family.

In Methanoregula boonei (strain DSM 21154 / JCM 14090 / 6A8), this protein is UPF0280 protein Mboo_1274.